The following is a 472-amino-acid chain: Serine/threonine-protein kinase ULK3 (472 aa).

The Protein kinase domain maps to 14-270 (FILTERLGSG…FQDFFAHPWV (257 aa)). ATP is bound by residues 20 to 28 (LGSGTYATV) and lysine 44. Aspartate 137 serves as the catalytic Proton acceptor. Phosphoserine is present on serine 176. In terms of domain architecture, MIT 1 spans 281-347 (LAQATALVVE…VSRAEELKAI (67 aa)). Phosphoserine; by autocatalysis occurs at positions 350 and 384. The MIT 2 domain maps to 376–444 (LLAALEVASA…ARAEYLKEQI (69 aa)). Position 464 is a phosphoserine (serine 464).

The protein belongs to the protein kinase superfamily. Ser/Thr protein kinase family. APG1/unc-51/ULK1 subfamily. Interacts (via protein kinase domain) with SUFU. Autophosphorylated. Autophosphorylation is blocked by interaction with SUFU.

The protein resides in the cytoplasm. The catalysed reaction is L-seryl-[protein] + ATP = O-phospho-L-seryl-[protein] + ADP + H(+). It catalyses the reaction L-threonyl-[protein] + ATP = O-phospho-L-threonyl-[protein] + ADP + H(+). Serine/threonine protein kinase that acts as a regulator of Sonic hedgehog (SHH) signaling and autophagy. Acts as a negative regulator of SHH signaling in the absence of SHH ligand: interacts with SUFU, thereby inactivating the protein kinase activity and preventing phosphorylation of GLI proteins (GLI1, GLI2 and/or GLI3). Positively regulates SHH signaling in the presence of SHH: dissociates from SUFU, autophosphorylates and mediates phosphorylation of GLI2, activating it and promoting its nuclear translocation. Phosphorylates in vitro GLI2, as well as GLI1 and GLI3, although less efficiently. Also acts as a regulator of autophagy: following cellular senescence, able to induce autophagy. This is Serine/threonine-protein kinase ULK3 (Ulk3) from Rattus norvegicus (Rat).